An 890-amino-acid polypeptide reads, in one-letter code: Genome polyprotein 2 (890 aa).

Positions 135–255 (AFNFAHGYCY…NSDLLNGIVG (121 aa)) constitute a Peptidase C6 domain. Residues Cys-143 and His-215 each act as for helper component proteinase activity in the active site. A disordered region spans residues 506 to 533 (FTTSGDDDSPPPPGDSPSRPPGRSPDRV). A compositionally biased stretch (pro residues) spans 515–528 (PPPPGDSPSRPPGR). Positions 788–816 (ELVQRSMTKLDKEIELFQAQIDSQRRAVT) form a coiled coil.

The protein belongs to the bymoviruses polyprotein 2 family. Post-translationally, the viral RNA2 of bymoviruses is expressed as a single polyprotein which undergoes post-translational proteolytic processing resulting in the production of at least two individual proteins. The HC-pro cleaves its C-terminus autocatalytically (Potential).

It carries out the reaction Hydrolyzes a Gly-|-Gly bond at its own C-terminus, commonly in the sequence -Tyr-Xaa-Val-Gly-|-Gly, in the processing of the potyviral polyprotein.. This chain is Genome polyprotein 2, found in Hordeum vulgare (Barley).